The following is a 1225-amino-acid chain: MMKSFGSIRSIFMHADGVDWMLMALGLIGAVGDGFITPIIFFICSKLLNNVGGSSFDDETFMQTVAKNAVALVYVACASWVICFIEGYCWTRTGERQAAKMREKYLKAVLRQDVGYFDLHVTSTSDVITSVSSDSLVIQDFLSEKLPNFLMNTSAFVASYIVGFLLLWRLTIVGFPFIILLLIPGLMYGRALIRISMKIREEYNEAGSIAEQVISSVRTVYAFGSEKKMIEKFSTALQGSVKLGLRQGLAKGIAIGSNGITYAIWGFLTWYGSRMVMNHGSKGGTVSSVIVCVTFGGTSLGQSLSNLKYFSEAFVVGERIMKVINRVPGIDSDNLEGQILEKTRGEVEFNHVKFTYPSRPETPIFDDLCLRVPSGKTVALVGGSGSGKSTVISLLQRFYDPIAGEILIDGLPINKLQVKWLRSQMGLVSQEPVLFATSIKENILFGKEDASMDEVVEAAKASNAHSFISQFPNSYQTQVGERGVQLSGGQKQRIAIARAIIKSPIILLLDEATSALDSESERVVQEALDNASIGRTTIVIAHRLSTIRNADVICVVHNGRIIETGSHEELLEKLDGQYTSLVRLQQVDNKESDHISVEEGQASSLSKDLKYSPKEFIHSTSSNIVRDFPNLSPKDGKSLVPSFKRLMSMNRPEWKHALYGCLGAALFGAVQPIYSYSSGSMVSVYFLASHDQIKEKTRIYVLLFVGLALFTFLSNISQHYGFAYMGEYLTKRIRERMLGKILTFEVNWFDKDENSSGAICSRLAKDANMVRSLVGDRMSLLVQTISAVSITCAIGLVISWRFSIVMMSVQPVIVVCFYTQRVLLKSMSRNAIKGQDESSKLAAEAVSNIRTITAFSSQERIINLLKMVQEGPRKDSARQSWLAGIMLGTSQSLITCVSALNFWYGGKLIADGKMMSKEFLEIFLIFASTGRVIAEAGTMTKDLVKGSDAVASVFAVLDRNTTIEPENPDGYVPKKVKGQISFSNVDFAYPTRPDVIIFQNFSIDIEDGKSTAIVGPSGSGKSTIISLIERFYDPLKGIVKIDGRDIRSCHLRSLRQHIALVSQEPTLFAGTIRENIMYGGASNKIDESEIIEAAKAANAHDFITSLSNGYDTCCGDRGVQLSGGQKQRIAIARAVLKNPSVLLLDEATSALDSQSESVVQDALERLMVGRTSVVIAHRLSTIQKCDTIAVLENGAVVECGNHSSLLAKGPKGAYFSLVSLQRTLF.

The next 6 membrane-spanning stretches (helical) occupy residues 23-43 (MALG…IFFI), 70-90 (VALV…GYCW), 146-168 (LPNF…LLLW), 172-194 (IVGF…ALIR), 252-272 (GIAI…TWYG), and 284-304 (GTVS…GQSL). The ABC transmembrane type-1 1 domain occupies 23–312 (MALGLIGAVG…SLSNLKYFSE (290 aa)). Residues 347–583 (VEFNHVKFTY…LDGQYTSLVR (237 aa)) enclose the ABC transporter 1 domain. 382–389 (GGSGSGKS) contributes to the ATP binding site. A glycan (N-linked (GlcNAc...) asparagine) is linked at asparagine 530. 2 helical membrane passes run 657 to 677 (ALYG…YSYS) and 699 to 719 (IYVL…ISQH). An ABC transmembrane type-1 2 domain is found at 657 to 945 (ALYGCLGAAL…AGTMTKDLVK (289 aa)). The N-linked (GlcNAc...) asparagine glycan is linked to asparagine 754. 4 helical membrane-spanning segments follow: residues 780-800 (LLVQ…VISW), 804-824 (IVMM…RVLL), 880-900 (SWLA…VSAL), and 919-939 (FLEI…AGTM). Residues asparagine 960 and asparagine 1000 are each glycosylated (N-linked (GlcNAc...) asparagine). The ABC transporter 2 domain maps to 980 to 1218 (ISFSNVDFAY…GPKGAYFSLV (239 aa)). Residue 1015-1022 (GPSGSGKS) participates in ATP binding. Asparagine 1201 carries an N-linked (GlcNAc...) asparagine glycan.

It belongs to the ABC transporter superfamily. ABCB family. Multidrug resistance exporter (TC 3.A.1.201) subfamily.

The protein resides in the membrane. In Arabidopsis thaliana (Mouse-ear cress), this protein is ABC transporter B family member 18 (ABCB18).